Consider the following 70-residue polypeptide: Potassium channel toxin kappa-KTx 2.5 (70 aa).

Residues methionine 1–glycine 26 form the signal peptide. A propeptide spanning residues glutamate 27 to arginine 42 is cleaved from the precursor. 2 disulfides stabilise this stretch: cysteine 46-cysteine 64 and cysteine 50-cysteine 60.

This sequence belongs to the short scorpion toxin superfamily. Potassium channel inhibitor kappa-KTx family. Kappa-KTx 2 subfamily. As to expression, expressed by the venom gland.

The protein localises to the secreted. Functionally, voltage-independently blocks potassium currents on hKv1.1/KCNA1 (IC(50)=217 uM), and hKv1.4/KCNA4 (IC(50)=71 uM) (expressed in CHO cells). This chain is Potassium channel toxin kappa-KTx 2.5, found in Opisthacanthus cayaporum (South American scorpion).